Consider the following 260-residue polypeptide: GTP cyclohydrolase FolE2 (260 aa).

It belongs to the GTP cyclohydrolase IV family.

It carries out the reaction GTP + H2O = 7,8-dihydroneopterin 3'-triphosphate + formate + H(+). Its pathway is cofactor biosynthesis; 7,8-dihydroneopterin triphosphate biosynthesis; 7,8-dihydroneopterin triphosphate from GTP: step 1/1. Functionally, converts GTP to 7,8-dihydroneopterin triphosphate. The chain is GTP cyclohydrolase FolE2 from Desulfovibrio desulfuricans (strain ATCC 27774 / DSM 6949 / MB).